Consider the following 417-residue polypeptide: L-rhamnose isomerase (417 aa).

Positions 261, 293, and 295 each coordinate Mn(2+).

It belongs to the rhamnose isomerase family. Mn(2+) is required as a cofactor.

It is found in the cytoplasm. It carries out the reaction L-rhamnopyranose = L-rhamnulose. It functions in the pathway carbohydrate degradation; L-rhamnose degradation; glycerone phosphate from L-rhamnose: step 1/3. In terms of biological role, catalyzes the interconversion of L-rhamnose and L-rhamnulose. This is L-rhamnose isomerase from Oceanobacillus iheyensis (strain DSM 14371 / CIP 107618 / JCM 11309 / KCTC 3954 / HTE831).